Consider the following 241-residue polypeptide: 1-(5-phosphoribosyl)-5-[(5-phosphoribosylamino)methylideneamino] imidazole-4-carboxamide isomerase (241 aa).

Residue Asp10 is the Proton acceptor of the active site. Asp131 (proton donor) is an active-site residue.

It belongs to the HisA/HisF family.

Its subcellular location is the cytoplasm. The catalysed reaction is 1-(5-phospho-beta-D-ribosyl)-5-[(5-phospho-beta-D-ribosylamino)methylideneamino]imidazole-4-carboxamide = 5-[(5-phospho-1-deoxy-D-ribulos-1-ylimino)methylamino]-1-(5-phospho-beta-D-ribosyl)imidazole-4-carboxamide. It functions in the pathway amino-acid biosynthesis; L-histidine biosynthesis; L-histidine from 5-phospho-alpha-D-ribose 1-diphosphate: step 4/9. The protein is 1-(5-phosphoribosyl)-5-[(5-phosphoribosylamino)methylideneamino] imidazole-4-carboxamide isomerase of Hyphomonas neptunium (strain ATCC 15444).